A 1050-amino-acid polypeptide reads, in one-letter code: MIKETEQIPGPRPLPVVGNLFDMDLEHGLECLIRLADDFGPLFQITINGEKQIFATSQALVDELCDESRFHKAVMGGLEKLRMLASDGLFTAYHGERGWGIAHRILVPAFGPLRIRNMFEEMNDVAQQLCLKWARQGSSTSINITDDFTRLTLDTIALCTMNFRLNSFYNNETMHPFVKSMLYVLRESDIQSMLPGIANCIRVKARSRMSKHIQLMRNMARGIIQERRDQAEPVDDLLNTLLNGRDPVTGEGMSDDLIINNVITFLIAGHETTSGLLSFTFYYLLQNPHILERAQNEVDEVTGGERITVQHLGRLTYIDAILKESLRLMPTAPAFTVTPKKPEVLGGAWAIDAGQAVNVLLPVCLRDRSVFGPDADEFRPERMLEENFSKLPPNSWKPFGNGERSCIGRAFAWQEAQLVVAMVLQTFDLVPDDPSYKLRIKETLTIKPDGFRVRATLRRGQSATGLSQGSMSASGATSSVASPGPPAATGAQSNPAGGQRISFFYGSNSGTCKALAHRLASSLMGRGFTEQKLAALDTVVGNLPTDQPVIIVTTSYDGRPTDDAEEFVRWLESKRPVLQGVSYAVFGCGHHDWAKTFYRIPILIDDLMHKAGATRLTALGTANAAVSDLFSDLELWEETNLLPALREAFPPSNSSDVESSEPHQLQICVSKPRRVDMHRGLVEAKVTAVRTLTSPDSPEKRHVEFHVQGDTTWRPGDHVNILPVNPLSTVSRVLAYFQLAPDHSITVNSFNTQGLPSATPVSATELFSSFVELSQPATRKNLKALAMAAESKTDEQELIRLHDSYDALVRDKRVSVLDILERFPSISLPIGIFISMLPPLRLRTYSLSMAPSFKPSHGSLTFSVINEPAWSGNGQYLGVGSNYLASLTPGSLLYLSPRPAKDAFHLPADQFNTPIIMICAGSGLAPFMGFIQERMTWLKQGRPLAKGLLFFGCRGPHLDDLYYEELSEFEDAGVVEVHRAYSRAPDDVRAKGCRHVQHRLVTEAEAVRDHWGRNAIVYVCGSSNMARGVQTVLEEILGTLPPERYVAEIF.

Cys406 contacts heme. The segment covering 459 to 481 has biased composition (polar residues); it reads RGQSATGLSQGSMSASGATSSVA. The interval 459 to 495 is disordered; the sequence is RGQSATGLSQGSMSASGATSSVASPGPPAATGAQSNP. In terms of domain architecture, Flavodoxin-like spans 501–641; sequence ISFFYGSNSG…DLELWEETNL (141 aa). FMN contacts are provided by residues 507–511 and 585–617; these read SNSGT and VFGCGHHDWAKTFYRIPILIDDLMHKAGATRLT. The FAD-binding FR-type domain maps to 679–907; it reads RGLVEAKVTA…RPAKDAFHLP (229 aa).

This sequence in the N-terminal section; belongs to the cytochrome P450 family. It depends on FAD as a cofactor. The cofactor is FMN. Requires heme as cofactor.

The catalysed reaction is 2 oxidized [cytochrome P450] + NADPH = 2 reduced [cytochrome P450] + NADP(+) + H(+). It carries out the reaction an organic molecule + reduced [NADPH--hemoprotein reductase] + O2 = an alcohol + oxidized [NADPH--hemoprotein reductase] + H2O + H(+). The enzyme catalyses decane + reduced [NADPH--hemoprotein reductase] + O2 = 3-decanol + oxidized [NADPH--hemoprotein reductase] + H2O + H(+). It catalyses the reaction dodecane + reduced [NADPH--hemoprotein reductase] + O2 = 5-dodecanol + oxidized [NADPH--hemoprotein reductase] + H2O + H(+). The catalysed reaction is tetradecane + reduced [NADPH--hemoprotein reductase] + O2 = 7-tetradecanol + oxidized [NADPH--hemoprotein reductase] + H2O + H(+). It carries out the reaction hexadecane + reduced [NADPH--hemoprotein reductase] + O2 = 9-hexadecanol + oxidized [NADPH--hemoprotein reductase] + H2O + H(+). The enzyme catalyses dodecanoate + reduced [NADPH--hemoprotein reductase] + O2 = 5-hydroxydodecanoate + oxidized [NADPH--hemoprotein reductase] + H2O + H(+). It catalyses the reaction tetradecanoate + reduced [NADPH--hemoprotein reductase] + O2 = 7-hydroxytetradecanoate + oxidized [NADPH--hemoprotein reductase] + H2O + H(+). The catalysed reaction is hexadecanoate + reduced [NADPH--hemoprotein reductase] + O2 = 9-hydroxyhexadecanoate + oxidized [NADPH--hemoprotein reductase] + H2O + H(+). It carries out the reaction decan-1-ol + reduced [NADPH--hemoprotein reductase] + O2 = 1,3-decanediol + oxidized [NADPH--hemoprotein reductase] + H2O + H(+). The enzyme catalyses decan-1-ol + reduced [NADPH--hemoprotein reductase] + O2 = 1,7-decanediol + oxidized [NADPH--hemoprotein reductase] + H2O + H(+). It catalyses the reaction dodecan-1-ol + reduced [NADPH--hemoprotein reductase] + O2 = 1,5-dodecanediol + oxidized [NADPH--hemoprotein reductase] + H2O + H(+). The catalysed reaction is dodecan-1-ol + reduced [NADPH--hemoprotein reductase] + O2 = 1,4-dodecanediol + oxidized [NADPH--hemoprotein reductase] + H2O + H(+). It carries out the reaction dodecan-1-ol + reduced [NADPH--hemoprotein reductase] + O2 = 1,6-dodecanediol + oxidized [NADPH--hemoprotein reductase] + H2O + H(+). Its function is as follows. Self-sufficient cytochrome P450 monooxygenase that catalyzes the regioselective in-chain hydroxylation of alkanes, fatty alcohols, and fatty acids at the omega-7 position. Performs hydroxylation of C10-C16 n-alkanes and C12 and C14 fatty alcohols; and thereby enables the one step biocatalytic synthesis of rare alcohols such as 5-dodecanol and 7-tetradecanol. Converts 1-dodecanol into 1,5-dodecanediol as major product with very little sub-terminally hydroxylated products with the 1,4-dodecanediol and 1,6-dodecanediol more abundant. Does not use hexadecanediol nor decanoic acid as substrates. Converts dodecanoic acid to 5-hydroxydodecanoic acid which can be further converted into delta-dodecalactone by lactonization of the 5-hydroxy acid at low pH. Also gives sub-terminal hydroxylation of dodecanoic acid with 9-hydroxydodecanoic acid being the second most abundant product. The C14 and C16 fatty acids are double hydroxylated to yield dihydroxy acids hydroxylated at both the omega-7 position and a sub-terminal position (omega-1, omega-2, or omega-3). The protein is Self-sufficient cytochrome P450 monooxygenase CYP505E3 of Aspergillus terreus (strain NIH 2624 / FGSC A1156).